Here is a 177-residue protein sequence, read N- to C-terminus: Thymidine kinase (177 aa).

G11–S18 is an ATP binding site. The active-site Proton acceptor is E83. Position 113 (F113) interacts with substrate. Residues C138 and C141 each contribute to the Zn(2+) site. Residue I157–G161 coordinates substrate. Zn(2+) is bound by residues C170 and C173.

The protein belongs to the thymidine kinase family. In terms of assembly, homotetramer. Two molecules of substrate bind to each enzyme tetramer.

The catalysed reaction is thymidine + ATP = dTMP + ADP + H(+). Phosphorylates thymidine and thymidine analogs, such as azidothymidine (AZT). Part of the salvage pathway for pyrimidine deoxyribonucleotide synthesis. This is Thymidine kinase (OPG101) from Cynomys gunnisoni (Gunnison's prairie dog).